A 297-amino-acid polypeptide reads, in one-letter code: Formylmethanofuran--tetrahydromethanopterin formyltransferase (297 aa).

Belongs to the FTR family. As to quaternary structure, homotetramer.

Its subcellular location is the cytoplasm. The catalysed reaction is N-formylmethanofuran + 5,6,7,8-tetrahydromethanopterin + H(+) = N(5)-formyl-5,6,7,8-tetrahydromethanopterin + methanofuran. Its pathway is one-carbon metabolism; methanogenesis from CO(2); 5,10-methenyl-5,6,7,8-tetrahydromethanopterin from CO(2): step 2/3. In terms of biological role, catalyzes the reversible transfer of a formyl group from formylmethanofuran (formyl-MFR) to tetrahydromethanopterin (H(4)MPT) to produce 5-formyl tetrahydromethanopterin (5-formyl-H(4)MPT) and methanofuran (MFR). The polypeptide is Formylmethanofuran--tetrahydromethanopterin formyltransferase (Methanococcoides burtonii (strain DSM 6242 / NBRC 107633 / OCM 468 / ACE-M)).